The following is a 467-amino-acid chain: ATP synthase subunit beta (467 aa).

Residue 150–157 (GGAGVGKT) participates in ATP binding.

This sequence belongs to the ATPase alpha/beta chains family. In terms of assembly, F-type ATPases have 2 components, CF(1) - the catalytic core - and CF(0) - the membrane proton channel. CF(1) has five subunits: alpha(3), beta(3), gamma(1), delta(1), epsilon(1). CF(0) has three main subunits: a(1), b(2) and c(9-12). The alpha and beta chains form an alternating ring which encloses part of the gamma chain. CF(1) is attached to CF(0) by a central stalk formed by the gamma and epsilon chains, while a peripheral stalk is formed by the delta and b chains.

The protein resides in the cell inner membrane. The catalysed reaction is ATP + H2O + 4 H(+)(in) = ADP + phosphate + 5 H(+)(out). Functionally, produces ATP from ADP in the presence of a proton gradient across the membrane. The catalytic sites are hosted primarily by the beta subunits. This is ATP synthase subunit beta from Vibrio alginolyticus.